Here is a 256-residue protein sequence, read N- to C-terminus: Ribonuclease HII (256 aa).

The RNase H type-2 domain occupies 72-256 (QYIAGMDEVG…SFNPVPKYLN (185 aa)). A divalent metal cation contacts are provided by Asp-78, Glu-79, and Asp-170.

The protein belongs to the RNase HII family. Mn(2+) is required as a cofactor. Mg(2+) serves as cofactor.

Its subcellular location is the cytoplasm. It carries out the reaction Endonucleolytic cleavage to 5'-phosphomonoester.. Endonuclease that specifically degrades the RNA of RNA-DNA hybrids. In Limosilactobacillus reuteri (strain DSM 20016) (Lactobacillus reuteri), this protein is Ribonuclease HII.